The sequence spans 204 residues: UPF0637 protein lwe1043 (204 aa).

It belongs to the UPF0637 family.

The chain is UPF0637 protein lwe1043 from Listeria welshimeri serovar 6b (strain ATCC 35897 / DSM 20650 / CCUG 15529 / CIP 8149 / NCTC 11857 / SLCC 5334 / V8).